Reading from the N-terminus, the 123-residue chain is Large ribosomal subunit protein uL14c (123 aa).

It belongs to the universal ribosomal protein uL14 family. Part of the 50S ribosomal subunit. Interacts with IOJAP.

The protein localises to the plastid. The protein resides in the chloroplast. Functionally, binds to 23S rRNA. This is Large ribosomal subunit protein uL14c from Zea mays (Maize).